A 533-amino-acid chain; its full sequence is Large neutral amino acids transporter small subunit 2 (533 aa).

The tract at residues 1-33 (MEKGTRQRNNTAKNHPDRGSDTSPEAEASSGGG) is disordered. At 1–45 (MEKGTRQRNNTAKNHPDRGSDTSPEAEASSGGGGVALKKEIGLVS) the chain is on the cytoplasmic side. Residues S20, S23, S29, and S30 each carry the phosphoserine modification. The helical transmembrane segment at 46 to 66 (ACGIIVGNIIGSGIFVSPKGV) threads the bilayer. I54 contacts L-leucine. Topologically, residues 67-74 (LENAGSVG) are extracellular. The chain crosses the membrane as a helical span at residues 75 to 96 (LALIVWIVTGVITAVGALCYAE). The Cytoplasmic portion of the chain corresponds to 97 to 117 (LGVTIPKSGGDYSYVKDIFGG). Residues 118 to 150 (LAGFLRLWIAVLVIYPTNQAVIALTFSNYVLQP) traverse the membrane as a helical segment. Position 135 (N135) interacts with L-tryptophan. Residues 151–158 (LFPTCFPP) are Extracellular-facing. Residues 159 to 179 (ESGLRLLAAICLLLLTWVNCS) form a helical membrane-spanning segment. Residues 180–182 (SVR) are Cytoplasmic-facing. A helical membrane pass occupies residues 183 to 211 (WATRVQDIFTAGKLLALALIIIMGVVQIC). Residues 212-231 (KGEFFWLEPKNAFENFQEPD) are Extracellular-facing. The chain crosses the membrane as a helical span at residues 232 to 253 (IGLVALAFLQGSFAYGGWNFLN). G247 contributes to the L-leucine binding site. The Cytoplasmic portion of the chain corresponds to 254-266 (YVTEELVDPYKNL). A helical membrane pass occupies residues 267–288 (PRAIFISIPLVTFVYVFANIAY). The Extracellular portion of the chain corresponds to 289-313 (VTAMSPQELLASNAVAVTFGEKLLG). The chain crosses the membrane as a helical span at residues 314–339 (VMAWIMPISVALSTFGGVNGSLFTSS). The Cytoplasmic portion of the chain corresponds to 340 to 365 (RLFFAGAREGHLPSVLAMIHVKRCTP). A helical membrane pass occupies residues 366 to 383 (IPALLFTCLSTLLMLVTS). Over 384 to 387 (DMYT) the chain is Extracellular. The helical transmembrane segment at 388-409 (LINYVGFINYLFYGVTVAGQIV) threads the bilayer. N396 provides a ligand contact to L-tryptophan. Topologically, residues 410-424 (LRWKKPDIPRPIKIS) are cytoplasmic. The next 2 membrane-spanning stretches (helical) occupy residues 425–447 (LLFP…WSEP) and 448–467 (VVCG…YFLG). Topologically, residues 468 to 533 (VYWQHKPKCF…VKDPDSEEQP (66 aa)) are cytoplasmic. Residues 500–533 (GDSGTEETIDDVEEQHKPIFQPTPVKDPDSEEQP) form a disordered region. Over residues 502 to 512 (SGTEETIDDVE) the composition is skewed to acidic residues. S529 bears the Phosphoserine mark.

Belongs to the amino acid-polyamine-organocation (APC) superfamily. L-type amino acid transporter (LAT) (TC 2.A.3.8) family. Disulfide-linked heterodimer composed of the catalytic light chain subunit SLC7A8 and the heavy chain subunit SLC3A2. SLC3A2 acts as a chaperone for correct plasma membrane trafficking and stabilization of SLC7A8 and modulates the substrate affinity and specificity of SLC7A8. ICAM-1 associates with the heterodimer SLC3A2/SLC7A8; facilitates leucine uptake. As to expression, expression is seen in jejunum mucosa and the epithelial cells of the jejunum, ileum and colon, as well as in kidney, placenta, brain, testis and skeletal muscle. Expressed in retina, inner blood-retinal barrier of retina, retinal vascular endothelial cells. Also expressed in the intestinal epithelial cell line IEC-6 and in the retinal capillary endothelial cell line TR-iBRB2.

Its subcellular location is the cell membrane. The protein resides in the basolateral cell membrane. It catalyses the reaction L-dopa(out) + L-phenylalanine(in) = L-dopa(in) + L-phenylalanine(out). The catalysed reaction is 3,3'-diiodo-L-thyronine(out) = 3,3'-diiodo-L-thyronine(in). It carries out the reaction L-histidine(in) + L-phenylalanine(out) = L-histidine(out) + L-phenylalanine(in). The enzyme catalyses L-tryptophan(in) + L-phenylalanine(out) = L-tryptophan(out) + L-phenylalanine(in). It catalyses the reaction L-isoleucine(in) + L-phenylalanine(out) = L-isoleucine(out) + L-phenylalanine(in). The catalysed reaction is L-valine(in) + L-phenylalanine(out) = L-valine(out) + L-phenylalanine(in). It carries out the reaction L-leucine(in) + L-phenylalanine(out) = L-leucine(out) + L-phenylalanine(in). The enzyme catalyses L-glutamine(in) + L-phenylalanine(out) = L-glutamine(out) + L-phenylalanine(in). It catalyses the reaction L-cysteine(in) + L-phenylalanine(out) = L-cysteine(out) + L-phenylalanine(in). The catalysed reaction is L-phenylalanine(out) + L-methionine(in) = L-phenylalanine(in) + L-methionine(out). It carries out the reaction L-leucine(out) + L-methionine(in) = L-leucine(in) + L-methionine(out). The enzyme catalyses L-cysteine(out) + L-methionine(in) = L-cysteine(in) + L-methionine(out). It catalyses the reaction S-methylmercury-L-cysteine(out) + L-methionine(in) = S-methylmercury-L-cysteine(in) + L-methionine(out). The catalysed reaction is S-methylmercury-L-cysteine(in) + L-leucine(out) = S-methylmercury-L-cysteine(out) + L-leucine(in). It carries out the reaction S-methylmercury-L-cysteine(in) + L-phenylalanine(out) = S-methylmercury-L-cysteine(out) + L-phenylalanine(in). The enzyme catalyses L-phenylalanine(out) + L-serine(in) = L-phenylalanine(in) + L-serine(out). It catalyses the reaction L-phenylalanine(out) + glycine(in) = L-phenylalanine(in) + glycine(out). The catalysed reaction is L-phenylalanine(out) + L-alanine(in) = L-phenylalanine(in) + L-alanine(out). It carries out the reaction 3,3',5-triiodo-L-thyronine(out) = 3,3',5-triiodo-L-thyronine(in). Leucine transport activity is inhibited by 2-amino-bicyclo-(2,2,1)-heptane-2-carboxylate (BCH), glycine, L-isomers of the neutral amino acids and histidine. In terms of biological role, associates with SLC3A2 to form a functional heterodimeric complex that translocates small and large neutral amino acids with broad specificity and a stoichiometry of 1:1. Functions as amino acid antiporter mediating the influx of extracellular essential amino acids mainly in exchange with the efflux of highly concentrated intracellular amino acids. Has relatively symmetrical selectivities but strongly asymmetrical substrate affinities at both the intracellular and extracellular sides of the transporter. This asymmetry allows SLC7A8 to regulate intracellular amino acid pools (mM concentrations) by exchange with external amino acids (uM concentration range), equilibrating the relative concentrations of different amino acids across the plasma membrane instead of mediating their net uptake. May play an essential role in the reabsorption of neutral amino acids from the epithelial cells to the bloodstream in the kidney. Involved in the uptake of methylmercury (MeHg) when administered as the L-cysteine or D,L-homocysteine complexes, and hence plays a role in metal ion homeostasis and toxicity. Involved in the cellular activity of small molecular weight nitrosothiols, via the stereoselective transport of L-nitrosocysteine (L-CNSO) across the transmembrane. Imports the thyroid hormone diiodothyronine (T2) and to a smaller extent triiodothyronine (T3) but not rT 3 or thyroxine (T4). Mediates the uptake of L-DOPA. May participate in auditory function. The chain is Large neutral amino acids transporter small subunit 2 (Slc7a8) from Rattus norvegicus (Rat).